The sequence spans 1960 residues: Exophilin-5 (1960 aa).

The region spanning 7–63 (GFDFSFLNEEEARKILQVLERNEELRRAEKDRISKLQKTKRDIRWLQGATGEWFEEI) is the RabBD domain. 3 stretches are compositionally biased toward polar residues: residues 325 to 334 (ASPATGSFTA), 342 to 366 (DTQN…LSSI), and 635 to 645 (SQSSSFPDSTA). 5 disordered regions span residues 325 to 366 (ASPA…LSSI), 616 to 645 (TPAS…DSTA), 672 to 720 (HSTD…TGLP), 734 to 835 (DFQN…SSNT), and 910 to 976 (FSRS…KGRV). Residues 673-682 (STDSLSLTDT) are compositionally biased toward low complexity. Over residues 692–707 (NSEKDMDVSVSKDEQL) the composition is skewed to basic and acidic residues. Residues serine 799 and serine 802 each carry the phosphoserine modification. 2 stretches are compositionally biased toward polar residues: residues 808–835 (ESGT…SSNT) and 910–920 (FSRSLSDQDPG). Residues 921–932 (QEQREEKDKATK) show a composition bias toward basic and acidic residues. A compositionally biased stretch (polar residues) spans 933 to 945 (SQDNQLAVNSTDN). The residue at position 1027 (serine 1027) is a Phosphoserine. Residues 1035 to 1095 (QESKGTVASV…PKATKKMTDM (61 aa)) form a disordered region. Polar residues predominate over residues 1062–1074 (GKSTSDKPSSPES). Phosphoserine is present on residues serine 1083 and serine 1117. 3 disordered regions span residues 1291-1375 (AQVQ…LSRE), 1389-1493 (PLLH…DSES), and 1510-1759 (EAQP…EPHL). Basic and acidic residues predominate over residues 1318–1336 (PESKDVSQLPDRETSKSTL). The segment covering 1356-1365 (KEISPSNVSK) has biased composition (polar residues). The segment covering 1392 to 1403 (HQEKGAGKEHTK) has biased composition (basic and acidic residues). 2 stretches are compositionally biased toward polar residues: residues 1470 to 1493 (RETS…DSES) and 1520 to 1533 (SEAS…TNTA). At serine 1493 the chain carries Phosphoserine. 2 stretches are compositionally biased toward basic and acidic residues: residues 1534-1546 (EMRK…HMLT) and 1561-1571 (TNTDETKDRYS). The span at 1572–1586 (GKHRLAAISKASKRI) shows a compositional bias: basic residues. The segment covering 1637–1657 (ESSQMNVDKSETLLQETTVSS) has biased composition (polar residues). Phosphoserine occurs at positions 1724, 1739, 1789, and 1819. The segment covering 1732-1741 (TQKSTINSHC) has biased composition (polar residues). 2 disordered regions span residues 1828–1847 (ESES…STSS) and 1906–1960 (VNSP…ESEL). A compositionally biased stretch (acidic residues) spans 1939–1950 (WDTDTTTDDEYY). The span at 1951–1960 (LDEKDKESEL) shows a compositional bias: basic and acidic residues.

As to quaternary structure, interacts with RAB27A.

In terms of biological role, may act as Rab effector protein and play a role in vesicle trafficking. The chain is Exophilin-5 from Mus musculus (Mouse).